A 604-amino-acid polypeptide reads, in one-letter code: MPLAMLLLLLLLLSPDSQTAHGHPLYTRLSPGALQVLSAQGTQALQAAQRSAQWAIKRVLMEIQHRLHECQGPGRPRPQAPLLQDPPEPVQCGERHQGVANTTRAHGRIVGGSTAPSGAWPWLVRLQLGGLPLCGGVLVAASWVLTAAHCFAGASNELLWTVMLAEGPQGEQAEEVQVNRILPHPKFDPQTFHNDLALVQLWTPVSPEGPARPICLPQGSREPPAGTPCAIAGWGALFEDGPESEAVREARVPLLSADTCQKVLGPGLRPSTMLCAGYLAGGIDSCQGDSGGPLTCSEPGPRPREVLFGVTSWGDGCGEPGKPGVYTRVTVFKDWLQEQMSAGPSTREPSCRELLNWNAREEEPFTDAPGLCAFYARQCLGSESSCARLALQQCLQRRRRCELRSLAHTLLGLLRGAQELLGPRPGLRRGVSAPARSAPSLQELPGHNPREQRLYSGSRIAGTWLQKPKPERRPETKGCPGLEPLQQKLAAIQRAHAWILQIPAEHLAMNFHEVLADLGSKTLTGLFRAWVRAGLGDQRVVFSGLVGLEPSTLAHSLPRLLVQALKAFRSASLTEGEPQAPWIGADQGQRLGKERQGQLQPPVP.

The N-terminal stretch at 1-22 (MPLAMLLLLLLLLSPDSQTAHG) is a signal peptide. A disordered region spans residues 70–94 (CQGPGRPRPQAPLLQDPPEPVQCGE). Residues 75–89 (RPRPQAPLLQDPPEP) are compositionally biased toward pro residues. N101 is a glycosylation site (N-linked (GlcNAc...) asparagine). Positions 109 to 341 (IVGGSTAPSG…FKDWLQEQMS (233 aa)) constitute a Peptidase S1 domain. An intrachain disulfide couples C134 to C150. Active-site charge relay system residues include H149 and D195. 3 cysteine pairs are disulfide-bonded: C229–C296, C260–C275, and C286–C317. S290 functions as the Charge relay system in the catalytic mechanism. Disordered regions lie at residues 424-452 (RPGL…PREQ) and 578-604 (PQAP…PPVP).

Belongs to the peptidase S1 family. Expressed in the eye: present in the retina and in the optic nerve.

The protein resides in the endoplasmic reticulum membrane. In terms of biological role, serine protease required during eye development. This chain is Serine protease 56 (Prss56), found in Mus musculus (Mouse).